The following is a 506-amino-acid chain: Ecdysteroid UDP-glucosyltransferase (506 aa).

Positions 1 to 18 are cleaved as a signal peptide; it reads MTILCWLALLSTLTAVNA.

This sequence belongs to the UDP-glycosyltransferase family. Post-translationally, glycosylated.

Catalyzes the transfer of glucose from UDP-glucose to ecdysteroids which are insect molting hormones. Acts on the host at the organismal level to block its development, thereby increasing the yield of progeny virus. This Lepidoptera (butterflies and moths) protein is Ecdysteroid UDP-glucosyltransferase (EGT).